The sequence spans 423 residues: Endoplasmic reticulum junction formation protein lunapark (423 aa).

At 1–45 the chain is on the cytoplasmic side; it reads MGALLAKWRAKPSTVEVLEKMEKDIQSLEEFRDKNQKLRKIWVAR. The stretch at 16-40 forms a coiled coil; that stretch reads EVLEKMEKDIQSLEEFRDKNQKLRK. A helical transmembrane segment spans residues 46–66; it reads LFFYSTILYILTSLTVYLWYL. The Lumenal segment spans residues 67–77; that stretch reads PDGMTARLLTM. The chain crosses the membrane as a helical span at residues 78-98; that stretch reads LLFLSFPVLIWFVRTLLILWF. Over 99 to 423 the chain is Cytoplasmic; sequence SRRTERNNDA…ETEESFMETE (325 aa). Residues 101-128 adopt a coiled-coil conformation; sequence RTERNNDALELLKTEKKKILEEVMEKET. The interval 147-169 is disordered; the sequence is KELELPVPGPPITPRPGQDLRQR. Threonine 159 is modified (phosphothreonine). Phosphoserine occurs at positions 177, 179, and 188. At threonine 198 the chain carries Phosphothreonine. The segment at 200 to 247 is disordered; it reads SLQRDTSAPGGPPERSVQPTPQSNILQRRPGSPATTVSGMAIHPPGPP. Serine 206 and serine 215 each carry phosphoserine. The span at 216 to 225 shows a compositional bias: polar residues; sequence VQPTPQSNIL. Threonine 219 is subject to Phosphothreonine. Residues serine 222 and serine 231 each carry the phosphoserine modification. Residues 280 to 305 form a C4-type; plays a role in ER morphology zinc finger; it reads CQQCFSHNGMALKEEFEYVAFRCAYC. Residues 318–423 form a disordered region; the sequence is APRLQEINFD…ETEESFMETE (106 aa). Residues 334–343 show a composition bias toward polar residues; the sequence is DSQGSVSSVQ. Composition is skewed to acidic residues over residues 370-391 and 414-423; these read QAIE…DDSE and ETEESFMETE.

The protein belongs to the lunapark family. In terms of assembly, homodimer; homodimerization requires the C4-type zinc finger motif and decreases during mitosis in a phosphorylation-dependent manner. Phosphorylated. Phosphorylation at Thr-159 occurs during interphase. Phosphorylation at Ser-177, Ser-179, Ser-188, Thr-198, Ser-206, Ser-215, Thr-219, Ser-222 and Ser-231 occurs during mitosis; these phosphorylations reduce both its homodimerization and the ER three-way tubular junction formation.

The protein localises to the endoplasmic reticulum membrane. Its function is as follows. Endoplasmic reticulum (ER)-shaping membrane protein that plays a role in determining ER morphology. Involved in the stabilization of nascent three-way ER tubular junctions within the ER network. May also play a role as a curvature-stabilizing protein within three-way ER tubular junction network. This is Endoplasmic reticulum junction formation protein lunapark (lnpk) from Xenopus tropicalis (Western clawed frog).